Consider the following 337-residue polypeptide: 3-isopropylmalate dehydrogenase (337 aa).

The substrate site is built by arginine 88, arginine 98, arginine 122, and aspartate 212. 3 residues coordinate Mg(2+): aspartate 212, aspartate 236, and aspartate 240. 272–284 contributes to the NAD(+) binding site; sequence GSAPDIAGKGIAD.

It belongs to the isocitrate and isopropylmalate dehydrogenases family. LeuB type 2 subfamily. As to quaternary structure, homodimer. The cofactor is Mg(2+). It depends on Mn(2+) as a cofactor.

It is found in the cytoplasm. It catalyses the reaction (2R,3S)-3-isopropylmalate + NAD(+) = 4-methyl-2-oxopentanoate + CO2 + NADH. Its pathway is amino-acid biosynthesis; L-leucine biosynthesis; L-leucine from 3-methyl-2-oxobutanoate: step 3/4. Functionally, catalyzes the oxidation of 3-carboxy-2-hydroxy-4-methylpentanoate (3-isopropylmalate) to 3-carboxy-4-methyl-2-oxopentanoate. The product decarboxylates to 4-methyl-2 oxopentanoate. The protein is 3-isopropylmalate dehydrogenase of Rhodococcus erythropolis (strain PR4 / NBRC 100887).